The chain runs to 423 residues: Histidine--tRNA ligase (423 aa).

It belongs to the class-II aminoacyl-tRNA synthetase family. In terms of assembly, homodimer.

It is found in the cytoplasm. The enzyme catalyses tRNA(His) + L-histidine + ATP = L-histidyl-tRNA(His) + AMP + diphosphate + H(+). This Shewanella loihica (strain ATCC BAA-1088 / PV-4) protein is Histidine--tRNA ligase.